The following is a 245-amino-acid chain: P2Y purinoceptor 13 (245 aa).

Residues 1-9 (QLRAFVCRL) are Extracellular-facing. C7 and C85 form a disulfide bridge. Residues 10 to 30 (SSVIFYETMYVGIVLLGLIAF) traverse the membrane as a helical segment. Topologically, residues 31–35 (DRFLK) are cytoplasmic. Residues 36 to 56 (IIRPLRNIFLKKTVFAKTVSV) form a helical membrane-spanning segment. Residues 57 to 85 (FIWSFFFFISLPNMILSNKEATPSSVKKC) lie on the Extracellular side of the membrane. A helical membrane pass occupies residues 86 to 106 (ASLKGPLGLKWHQIVNNISQF). The Cytoplasmic portion of the chain corresponds to 107–126 (IFWTVFVLMLVFYVVIAKKV). Residues 127–147 (YDSYRKSKSKDRKNNKKLEGK) traverse the membrane as a helical segment. Residues 148-174 (VFVVVAVFFVCFAPFHFTRVPYTYSQT) lie on the Extracellular side of the membrane. The helical transmembrane segment at 175–195 (NNKTDCRLQNQLFIAKETTLF) threads the bilayer. At 196–245 (LAATNICMDPLIYIFLCKKFTEKLPCMRGRKTIASSQENQSSQTDNITLG) the chain is on the cytoplasmic side.

Belongs to the G-protein coupled receptor 1 family.

It is found in the cell membrane. Receptor for ADP. Coupled to G(i)-proteins. May play a role in hematopoiesis and the immune system. In Macaca fascicularis (Crab-eating macaque), this protein is P2Y purinoceptor 13 (P2RY13).